A 620-amino-acid chain; its full sequence is Chaperone protein HscA homolog (620 aa).

Belongs to the heat shock protein 70 family.

In terms of biological role, chaperone involved in the maturation of iron-sulfur cluster-containing proteins. Has a low intrinsic ATPase activity which is markedly stimulated by HscB. This Acinetobacter baylyi (strain ATCC 33305 / BD413 / ADP1) protein is Chaperone protein HscA homolog.